The chain runs to 326 residues: Protein ORF5 in retron Ec67 (326 aa).

Residues 1–24 form a disordered region; it reads MGKSKKNRAAATNQLKHKSQTSAE. Polar residues predominate over residues 10–24; it reads AATNQLKHKSQTSAE.

The protein belongs to the phage portal family. PBSX subfamily.

In Escherichia coli, this protein is Protein ORF5 in retron Ec67.